The following is a 171-amino-acid chain: Neudesin (171 aa).

The N-terminal stretch at 1–30 (MARPAPWWWLRPLAALALALALVRVPSARA) is a signal peptide. In terms of domain architecture, Cytochrome b5 heme-binding spans 43-128 (VRLFTEEELA…KELEALDDIF (86 aa)). K135 carries the N6-acetyllysine modification. Positions 151 to 171 (GSPNLDFKPEDQPHFDIKDEF) are disordered. The span at 157–171 (FKPEDQPHFDIKDEF) shows a compositional bias: basic and acidic residues.

It belongs to the cytochrome b5 family. MAPR subfamily. As to quaternary structure, interacts with PINK1 and PARK7.

It is found in the secreted. Its subcellular location is the extracellular space. The protein localises to the mitochondrion. The protein resides in the endoplasmic reticulum. Functionally, acts as a neurotrophic factor in postnatal mature neurons enhancing neuronal survival. Promotes cell proliferation and neurogenesis in undifferentiated neural progenitor cells at the embryonic stage and inhibits differentiation of astrocytes. Its neurotrophic activity is exerted via MAPK1/ERK2, MAPK3/ERK1 and AKT1/AKT pathways. Neurotrophic activity is enhanced by binding to heme. Also acts as an anorexigenic neurotrophic factor that contributes to energy balance. The polypeptide is Neudesin (Rattus norvegicus (Rat)).